A 587-amino-acid polypeptide reads, in one-letter code: Bifunctional lycopene cyclase/phytoene synthase (587 aa).

The interval 1–242 (MGYDYALVHV…IVFGIAAFDK (242 aa)) is lycopene beta-cyclase. 7 helical membrane-spanning segments follow: residues 8–28 (VHVKYTIPLAALLTVFSYPVF), 35–55 (RTLFIVTIAFVATIPWDSYLI), 77–97 (AEELFFFIIQTYITAQLYIIL), 120–140 (GKLVGQLALSGSVLLGTWLIA), 150–170 (LILVWACTFALFTWTITAHFL), 172–192 (ALPLACTALPILLPTVYLWIV), and 220–240 (IEEATFFLVTNMLIVFGIAAF). Residues 249–587 (AFPEKFDKPA…WVAWSTLMAA (339 aa)) form a phytoene synthase region.

It in the N-terminal section; belongs to the lycopene beta-cyclase family. In the C-terminal section; belongs to the phytoene/squalene synthase family.

The protein resides in the membrane. The catalysed reaction is all-trans-lycopene = gamma-carotene. The enzyme catalyses gamma-carotene = all-trans-beta-carotene. It carries out the reaction 2 (2E,6E,10E)-geranylgeranyl diphosphate = 15-cis-phytoene + 2 diphosphate. The protein operates within carotenoid biosynthesis; beta-carotene biosynthesis. Its pathway is carotenoid biosynthesis; phytoene biosynthesis; all-trans-phytoene from geranylgeranyl diphosphate: step 1/1. Its function is as follows. Bifunctional enzyme that catalyzes the reactions from geranylgeranyl diphosphate to phytoene (phytoene synthase) and lycopene to beta-carotene via the intermediate gamma-carotene (lycopene cyclase). The chain is Bifunctional lycopene cyclase/phytoene synthase from Colletotrichum graminicola (strain M1.001 / M2 / FGSC 10212) (Maize anthracnose fungus).